Reading from the N-terminus, the 347-residue chain is Serpentine receptor class beta-2 (347 aa).

7 helical membrane-spanning segments follow: residues 27–47 (IAQL…YIFL), 62–82 (FLLV…AFLF), 108–128 (GNLS…GFSI), 146–166 (FLGP…LYHV), 194–214 (FWEL…FLLV), 246–266 (LIVS…TIFV), and 288–308 (ITVP…LSFM).

This sequence belongs to the nematode receptor-like protein srb family.

It is found in the membrane. This Caenorhabditis elegans protein is Serpentine receptor class beta-2 (srb-2).